A 551-amino-acid polypeptide reads, in one-letter code: uncharacterized protein (551 aa).

Residues 1-36 constitute a mitochondrion transit peptide; it reads MMALVRDRRAHYVMSIVIRWVHCFSSSLRGTFGTRW. Positions 203–315 form a coiled coil; sequence TNILLRKLKE…MDSRDRLREE (113 aa). Residues 354–389 form a disordered region; the sequence is REASLSPWPKSPPSTTALRPHSATMSVSSAGAQKAK. Positions 366-384 are enriched in polar residues; sequence PSTTALRPHSATMSVSSAG. Residues 405 to 439 are a coiled coil; the sequence is KHGLESQIEALKANLENEKKKVERFRKEADRLNKS. Residues 519-551 are disordered; the sequence is LQLSPKGKLSESPKEESLEEPSMRQSSPAETVD. Polar residues predominate over residues 541 to 551; sequence MRQSSPAETVD.

As to quaternary structure, interacts with NOD2.

It is found in the mitochondrion. This is an uncharacterized protein from Homo sapiens (Human).